The following is a 201-amino-acid chain: Probable GTP-binding protein EngB (201 aa).

Residues 23 to 196 (TGPEIALAGR…HEAVEEILSM (174 aa)) enclose the EngB-type G domain. GTP contacts are provided by residues 31 to 38 (GRSNVGKS), 58 to 62 (GKTQM), 76 to 79 (DLPG), 143 to 146 (TKAD), and 175 to 177 (YSA). S38 and T60 together coordinate Mg(2+).

This sequence belongs to the TRAFAC class TrmE-Era-EngA-EngB-Septin-like GTPase superfamily. EngB GTPase family. Mg(2+) is required as a cofactor.

Its function is as follows. Necessary for normal cell division and for the maintenance of normal septation. This chain is Probable GTP-binding protein EngB, found in Desulfitobacterium hafniense (strain DSM 10664 / DCB-2).